The sequence spans 173 residues: Adenine phosphoribosyltransferase (173 aa).

Belongs to the purine/pyrimidine phosphoribosyltransferase family. As to quaternary structure, homodimer.

The protein resides in the cytoplasm. The enzyme catalyses AMP + diphosphate = 5-phospho-alpha-D-ribose 1-diphosphate + adenine. It functions in the pathway purine metabolism; AMP biosynthesis via salvage pathway; AMP from adenine: step 1/1. Its function is as follows. Catalyzes a salvage reaction resulting in the formation of AMP, that is energically less costly than de novo synthesis. This Listeria monocytogenes serotype 4b (strain CLIP80459) protein is Adenine phosphoribosyltransferase.